The sequence spans 348 residues: Peroxidase 40 (348 aa).

The first 21 residues, 1 to 21 (MKNLFNLFLMFFFAMPILSLS), serve as a signal peptide directing secretion. An N-linked (GlcNAc...) asparagine glycan is attached at asparagine 26. Cystine bridges form between cysteine 59/cysteine 139, cysteine 92/cysteine 97, cysteine 145/cysteine 344, and cysteine 224/cysteine 256. Histidine 90 (proton acceptor) is an active-site residue. 5 residues coordinate Ca(2+): aspartate 91, valine 94, glycine 96, aspartate 98, and serine 100. The segment at 170–189 (GRKDSRTASKQAATNGLPSP) is disordered. Residues 177-189 (ASKQAATNGLPSP) show a composition bias toward polar residues. Proline 187 is a substrate binding site. The N-linked (GlcNAc...) asparagine glycan is linked to asparagine 190. Histidine 217 contacts heme b. Threonine 218 contributes to the Ca(2+) binding site. Residues aspartate 269, threonine 272, and aspartate 277 each coordinate Ca(2+).

The protein belongs to the peroxidase family. Classical plant (class III) peroxidase subfamily. The cofactor is heme b. It depends on Ca(2+) as a cofactor.

It is found in the secreted. The catalysed reaction is 2 a phenolic donor + H2O2 = 2 a phenolic radical donor + 2 H2O. Its function is as follows. Removal of H(2)O(2), oxidation of toxic reductants, biosynthesis and degradation of lignin, suberization, auxin catabolism, response to environmental stresses such as wounding, pathogen attack and oxidative stress. These functions might be dependent on each isozyme/isoform in each plant tissue. In Arabidopsis thaliana (Mouse-ear cress), this protein is Peroxidase 40 (PER40).